The following is a 121-amino-acid chain: Large ribosomal subunit protein uL22c (121 aa).

This sequence belongs to the universal ribosomal protein uL22 family. In terms of assembly, part of the 50S ribosomal subunit.

It is found in the plastid. The protein localises to the chloroplast. Functionally, this protein binds specifically to 23S rRNA. The globular domain of the protein is located near the polypeptide exit tunnel on the outside of the subunit, while an extended beta-hairpin is found that lines the wall of the exit tunnel in the center of the 70S ribosome. This Welwitschia mirabilis (Tree tumbo) protein is Large ribosomal subunit protein uL22c (rpl22).